A 205-amino-acid polypeptide reads, in one-letter code: Probable GTP-binding protein EngB (205 aa).

The EngB-type G domain occupies 22–194 (ELPEIAFAGR…WESILDLCEI (173 aa)). GTP contacts are provided by residues 30–37 (GRSNVGKS), 57–61 (GRTQL), 75–78 (DLPG), 142–145 (TKAD), and 173–175 (FSA). 2 residues coordinate Mg(2+): Ser-37 and Thr-59.

It belongs to the TRAFAC class TrmE-Era-EngA-EngB-Septin-like GTPase superfamily. EngB GTPase family. The cofactor is Mg(2+).

Necessary for normal cell division and for the maintenance of normal septation. The polypeptide is Probable GTP-binding protein EngB (Desulfatibacillum aliphaticivorans).